We begin with the raw amino-acid sequence, 116 residues long: Large ribosomal subunit protein bL19 (116 aa).

The protein belongs to the bacterial ribosomal protein bL19 family.

Functionally, this protein is located at the 30S-50S ribosomal subunit interface and may play a role in the structure and function of the aminoacyl-tRNA binding site. This is Large ribosomal subunit protein bL19 from Nocardioides sp. (strain ATCC BAA-499 / JS614).